The chain runs to 144 residues: Universal stress protein F (144 aa).

The protein belongs to the universal stress protein A family. Homodimer.

The chain is Universal stress protein F (uspF) from Escherichia coli (strain K12).